Consider the following 427-residue polypeptide: UPF0415 protein C7orf25 homolog (427 aa).

Over residues 200 to 234 (GGEEEDEEDQEGDHEDLVEEEEDGEDDNDDDSDDT) the composition is skewed to acidic residues. Residues 200 to 236 (GGEEEDEEDQEGDHEDLVEEEEDGEDDNDDDSDDTDL) are disordered.

The protein belongs to the UPF0415 family.

The sequence is that of UPF0415 protein C7orf25 homolog from Danio rerio (Zebrafish).